The following is a 375-amino-acid chain: B3 domain-containing protein REM-like 2 (375 aa).

DNA-binding regions (TF-B3) lie at residues 51 to 147, 131 to 226, and 277 to 375; these read SFVA…KRLY, FVTV…YGTN, and RLVI…KSGK.

It is found in the nucleus. In Arabidopsis thaliana (Mouse-ear cress), this protein is B3 domain-containing protein REM-like 2.